The sequence spans 739 residues: Elongation factor 2 (739 aa).

The 243-residue stretch at 19–261 (RNIRNIGIIA…MVALHVPDPI (243 aa)) folds into the tr-type G domain. GTP contacts are provided by residues 28–35 (AHVDHGKT), 94–98 (DTPGH), and 148–151 (NKID). The residue at position 603 (His603) is a Diphthamide.

Belongs to the TRAFAC class translation factor GTPase superfamily. Classic translation factor GTPase family. EF-G/EF-2 subfamily.

It is found in the cytoplasm. Its function is as follows. Catalyzes the GTP-dependent ribosomal translocation step during translation elongation. During this step, the ribosome changes from the pre-translocational (PRE) to the post-translocational (POST) state as the newly formed A-site-bound peptidyl-tRNA and P-site-bound deacylated tRNA move to the P and E sites, respectively. Catalyzes the coordinated movement of the two tRNA molecules, the mRNA and conformational changes in the ribosome. The sequence is that of Elongation factor 2 from Korarchaeum cryptofilum (strain OPF8).